We begin with the raw amino-acid sequence, 359 residues long: Probable dual-specificity RNA methyltransferase RlmN (359 aa).

Glu-91 (proton acceptor) is an active-site residue. In terms of domain architecture, Radical SAM core spans 97–329; the sequence is QHYGHSVCVT…KKNGVNCVVR (233 aa). A disulfide bridge connects residues Cys-104 and Cys-340. [4Fe-4S] cluster is bound by residues Cys-111, Cys-115, and Cys-118. Residues 163-164, Ser-195, 218-220, and Asn-296 contribute to the S-adenosyl-L-methionine site; these read GE and SLH. Cys-340 acts as the S-methylcysteine intermediate in catalysis.

Belongs to the radical SAM superfamily. RlmN family. [4Fe-4S] cluster is required as a cofactor.

The protein localises to the cytoplasm. The enzyme catalyses adenosine(2503) in 23S rRNA + 2 reduced [2Fe-2S]-[ferredoxin] + 2 S-adenosyl-L-methionine = 2-methyladenosine(2503) in 23S rRNA + 5'-deoxyadenosine + L-methionine + 2 oxidized [2Fe-2S]-[ferredoxin] + S-adenosyl-L-homocysteine. It catalyses the reaction adenosine(37) in tRNA + 2 reduced [2Fe-2S]-[ferredoxin] + 2 S-adenosyl-L-methionine = 2-methyladenosine(37) in tRNA + 5'-deoxyadenosine + L-methionine + 2 oxidized [2Fe-2S]-[ferredoxin] + S-adenosyl-L-homocysteine. In terms of biological role, specifically methylates position 2 of adenine 2503 in 23S rRNA and position 2 of adenine 37 in tRNAs. The polypeptide is Probable dual-specificity RNA methyltransferase RlmN (Streptococcus pyogenes serotype M3 (strain ATCC BAA-595 / MGAS315)).